The chain runs to 264 residues: Thiazole synthase (264 aa).

Lys98 serves as the catalytic Schiff-base intermediate with DXP. Residues Gly159, 185–186, and 207–208 each bind 1-deoxy-D-xylulose 5-phosphate; these read AG and AS. Residues 243–264 are disordered; that stretch reads HFAEASSPPEGRAHLDPERPAF. Residues 253–264 are compositionally biased toward basic and acidic residues; it reads GRAHLDPERPAF.

Belongs to the ThiG family. Homotetramer. Forms heterodimers with either ThiH or ThiS.

It localises to the cytoplasm. The enzyme catalyses [ThiS sulfur-carrier protein]-C-terminal-Gly-aminoethanethioate + 2-iminoacetate + 1-deoxy-D-xylulose 5-phosphate = [ThiS sulfur-carrier protein]-C-terminal Gly-Gly + 2-[(2R,5Z)-2-carboxy-4-methylthiazol-5(2H)-ylidene]ethyl phosphate + 2 H2O + H(+). It participates in cofactor biosynthesis; thiamine diphosphate biosynthesis. Functionally, catalyzes the rearrangement of 1-deoxy-D-xylulose 5-phosphate (DXP) to produce the thiazole phosphate moiety of thiamine. Sulfur is provided by the thiocarboxylate moiety of the carrier protein ThiS. In vitro, sulfur can be provided by H(2)S. The protein is Thiazole synthase of Streptomyces avermitilis (strain ATCC 31267 / DSM 46492 / JCM 5070 / NBRC 14893 / NCIMB 12804 / NRRL 8165 / MA-4680).